Here is a 518-residue protein sequence, read N- to C-terminus: MLAMDQGVVEEWLSEFKTLEETAVYNYAVSLKEKGSLVPALYKVIRENYSDLLEPVCHQLFEFYRSGEPRLQRFTLQFLPELVWSYLSVTAARDPHCSGCIEALLLGIYNLEIVDKDGQSKVLSFTIPSLSKPSVYHEPSSIGSLALTEGALANHGLSRVVYSGPHLQRETFTAQNRFEVLTFLLLCYNASLSYMSGSSLQSLCQLSSRVSICGYPRQQVRRYKGISSRLMVTSEFLVQLITGIHFALCNGEVDLGSKALDDVLYRAQLELFPEALLVGNAIKSSLHGASLKSNKEGTRSIQVEITPTASRISRNAVTSLSIRGHRWKRHDAVDLGSPDELTEIAEVDEGICTQASGAQSSPPTIVISSSAGGAAAGAGKLAGKGLRRLTGRSSKEKDKEKDAATGMDQLTRKQAAVRAMSENLELLSLKRLTLTASQSVPKSGSLSLSRTASAVFSRSFEQVSNVFSGNQPSSRASSPTSNHVAEQDEGVAYLDHISPAHQHRQRSPTISIHVTSDL.

Disordered stretches follow at residues 385-410 (GLRR…MDQL) and 466-492 (VFSG…EGVA). Residues 393–403 (SSKEKDKEKDA) are compositionally biased toward basic and acidic residues. Residues 466-484 (VFSGNQPSSRASSPTSNHV) are compositionally biased toward polar residues.

Belongs to the Hyccin family. As to quaternary structure, component of a phosphatidylinositol 4-kinase (PI4K) complex.

The protein resides in the cytoplasm. It localises to the cytosol. The protein localises to the cell membrane. Component of a complex required to localize phosphatidylinositol 4-kinase (PI4K) to the plasma membrane. The complex acts as a regulator of phosphatidylinositol 4-phosphate (PtdIns(4)P) synthesis. This chain is Hyccin (hycc1), found in Danio rerio (Zebrafish).